The chain runs to 132 residues: Large ribosomal subunit protein uL14 (132 aa).

This sequence belongs to the universal ribosomal protein uL14 family. In terms of assembly, part of the 50S ribosomal subunit. Forms a cluster with proteins L3 and L24e, part of which may contact the 16S rRNA in 2 intersubunit bridges.

Its function is as follows. Binds to 23S rRNA. Forms part of two intersubunit bridges in the 70S ribosome. The protein is Large ribosomal subunit protein uL14 of Halorubrum lacusprofundi (strain ATCC 49239 / DSM 5036 / JCM 8891 / ACAM 34).